The primary structure comprises 1151 residues: Semaphorin-5B (1151 aa).

Over 1–1036 the chain is Extracellular; that stretch reads MPCGFSPSPV…TDCAGFNLIH (1036 aa). Residues 103–553 enclose the Sema domain; the sequence is HPTVAFEDLQ…LRDGVLRVPL (451 aa). N153 is a glycosylation site (N-linked (GlcNAc...) asparagine). 2 cysteine pairs are disulfide-bonded: C172–C182 and C199–C208. 2 N-linked (GlcNAc...) asparagine glycosylation sites follow: N236 and N345. Cystine bridges form between C322–C425 and C346–C388. An N-linked (GlcNAc...) asparagine glycan is attached at N436. A PSI domain is found at 555–602; the sequence is RCAAYRSQGACLGARDPYCGWDGKQQRCSTLEDSSNMSLWTQNITACP. TSP type-1 domains are found at residues 664–720 and 722–771; these read NGAW…TPCP and PIFW…EGCP. Intrachain disulfides connect C676–C713, C680–C719, C691–C703, C734–C765, C738–C770, and C749–C755. A glycan (O-linked (GalNAc...) threonine) is linked at T788. TSP type-1 domains follow at residues 853–908, 910–965, and 966–1010; these read SGGW…QACP, RGAW…QACP, and EGWS…RPCP. 6 cysteine pairs are disulfide-bonded: C865–C902, C869–C907, C880–C892, C922–C959, C926–C964, and C937–C949. Residues 1037–1057 traverse the membrane as a helical; Signal-anchor for type III membrane protein segment; that stretch reads LVATGISCFLGSGLLTLAVYL. Residues 1058–1151 are Cytoplasmic-facing; sequence SCQHCQRQSQ…SPGQRCFPNS (94 aa).

It belongs to the semaphorin family.

Its subcellular location is the membrane. Functionally, may act as a positive axonal guidance cue. The protein is Semaphorin-5B (SEMA5B) of Homo sapiens (Human).